The sequence spans 72 residues: MATKDTGGGQQKATRSTEEVEEQAQDAQASEDLKERQEKLSDDVDSVLDEIDDVLEENAEDFVRSFVQKGGE.

A compositionally biased stretch (gly residues) spans 1 to 10; sequence MATKDTGGGQ. The tract at residues 1–45 is disordered; the sequence is MATKDTGGGQQKATRSTEEVEEQAQDAQASEDLKERQEKLSDDVD. Positions 10–60 form a coiled coil; sequence QQKATRSTEEVEEQAQDAQASEDLKERQEKLSDDVDSVLDEIDDVLEENAE. Residues 28 to 66 form an ARC ATPase binding region; the sequence is QASEDLKERQEKLSDDVDSVLDEIDDVLEENAEDFVRSF. Positions 31 to 42 are enriched in basic and acidic residues; that stretch reads EDLKERQEKLSD. Glu-72 is covalently cross-linked (Isoglutamyl lysine isopeptide (Glu-Lys) (interchain with K-? in acceptor proteins)).

The protein belongs to the prokaryotic ubiquitin-like protein family. In terms of assembly, strongly interacts with the proteasome-associated ATPase ARC through a hydrophobic interface; the interacting region of Pup lies in its C-terminal half. There is one Pup binding site per ARC hexamer ring.

It functions in the pathway protein degradation; proteasomal Pup-dependent pathway. Functionally, protein modifier that is covalently attached to lysine residues of substrate proteins, thereby targeting them for proteasomal degradation. The tagging system is termed pupylation. In Streptomyces coelicolor (strain ATCC BAA-471 / A3(2) / M145), this protein is Prokaryotic ubiquitin-like protein Pup.